The sequence spans 125 residues: Type II secretion system protein I (125 aa).

A propeptide spans 1 to 5 (MKQQG) (leader sequence). Residue Met6 is modified to N-methylmethionine. Residues 6–26 (MTLLEVMVALVIFALAGLTVL) form a helical membrane-spanning segment.

Belongs to the GSP I family. In terms of assembly, type II secretion is composed of four main components: the outer membrane complex, the inner membrane complex, the cytoplasmic secretion ATPase and the periplasm-spanning pseudopilus. Interacts with core component OutG. In terms of processing, cleaved by prepilin peptidase. Methylated by prepilin peptidase at the amino group of the N-terminal methionine once the leader sequence is cleaved by prepilin peptidase.

The protein localises to the cell inner membrane. In terms of biological role, component of the type II secretion system required for the energy-dependent secretion of extracellular factors such as proteases and toxins from the periplasm. Part of the pseudopilus tip complex that is critical for the recognition and binding of secretion substrates. In Dickeya chrysanthemi (Pectobacterium chrysanthemi), this protein is Type II secretion system protein I (outI).